Here is a 524-residue protein sequence, read N- to C-terminus: Nucleobase-ascorbate transporter 2 (524 aa).

12 helical membrane-spanning segments follow: residues 41 to 61 (YILA…MMGG), 69 to 89 (VVQT…LFGT), 91 to 111 (LPTV…IIHD), 133 to 153 (GAII…MWAI), 155 to 175 (SRFF…FGLF), 179 to 199 (FPVV…FVIF), 217 to 237 (FALI…TASG), 282 to 302 (AFAM…AFKA), 359 to 379 (RVIQ…KFGA), 380 to 400 (LFAS…FGLV), 419 to 439 (LFIV…FRDF), and 457 to 477 (DFLN…AVFL).

The protein belongs to the nucleobase:cation symporter-2 (NCS2) (TC 2.A.40) family. As to expression, expressed in cotyledons 10 days after imbibition (DAI). Expressed in the minor and major veins of cotyledons and leaves, in the shoot apex and pedicels. Expressed in the root meristems, root tips and lateral root primordia.

The protein localises to the membrane. The sequence is that of Nucleobase-ascorbate transporter 2 (NAT2) from Arabidopsis thaliana (Mouse-ear cress).